A 273-amino-acid polypeptide reads, in one-letter code: Light-independent protochlorophyllide reductase iron-sulfur ATP-binding protein (273 aa).

Residues 12 to 17 (GIGKST) and Lys-41 contribute to the ATP site. Residue Ser-16 participates in Mg(2+) binding. Positions 97 and 131 each coordinate [4Fe-4S] cluster. Residue 182-183 (NR) coordinates ATP.

The protein belongs to the NifH/BchL/ChlL family. Homodimer. Protochlorophyllide reductase is composed of three subunits; BchL, BchN and BchB. Requires [4Fe-4S] cluster as cofactor.

It carries out the reaction chlorophyllide a + oxidized 2[4Fe-4S]-[ferredoxin] + 2 ADP + 2 phosphate = protochlorophyllide a + reduced 2[4Fe-4S]-[ferredoxin] + 2 ATP + 2 H2O. Its pathway is porphyrin-containing compound metabolism; bacteriochlorophyll biosynthesis (light-independent). Functionally, component of the dark-operative protochlorophyllide reductase (DPOR) that uses Mg-ATP and reduced ferredoxin to reduce ring D of protochlorophyllide (Pchlide) to form chlorophyllide a (Chlide). This reaction is light-independent. The L component serves as a unique electron donor to the NB-component of the complex, and binds Mg-ATP. In Chloroflexus aggregans (strain MD-66 / DSM 9485), this protein is Light-independent protochlorophyllide reductase iron-sulfur ATP-binding protein.